A 123-amino-acid chain; its full sequence is Small ribosomal subunit protein uS12 (123 aa).

The segment at 1 to 30 (MPTIQQLVRKGRQDKVEKNKTPALEGSPQR) is disordered. Basic and acidic residues predominate over residues 11–20 (GRQDKVEKNK). D89 carries the 3-methylthioaspartic acid modification.

The protein belongs to the universal ribosomal protein uS12 family. In terms of assembly, part of the 30S ribosomal subunit. Contacts proteins S8 and S17. May interact with IF1 in the 30S initiation complex.

With S4 and S5 plays an important role in translational accuracy. Functionally, interacts with and stabilizes bases of the 16S rRNA that are involved in tRNA selection in the A site and with the mRNA backbone. Located at the interface of the 30S and 50S subunits, it traverses the body of the 30S subunit contacting proteins on the other side and probably holding the rRNA structure together. The combined cluster of proteins S8, S12 and S17 appears to hold together the shoulder and platform of the 30S subunit. The chain is Small ribosomal subunit protein uS12 (rpsL) from Streptomyces avermitilis (strain ATCC 31267 / DSM 46492 / JCM 5070 / NBRC 14893 / NCIMB 12804 / NRRL 8165 / MA-4680).